The chain runs to 642 residues: Bud site selection protein 5 (642 aa).

An N-terminal Ras-GEF domain is found at Glu-224–Lys-339. Residues Ser-412–Arg-640 enclose the Ras-GEF domain.

Interacts with AXL2, BEM1, GSP1 and in haploid cells with AXL1.

It localises to the bud neck. It is found in the cytoplasm. The protein localises to the cell cortex. GDP-GTP exchange factor (GEF) for the small GTPase BUD1/RSR1. Regulates the activity of BUD1 together with BUD2 which is a GTPase-activating protein (GAP) of BUD1. Required to produce both the axial and bipolar patterns of bud site selection. Determines the orientation of division axis. Overexpression can suppress mutations in PRP20 which is the GEF for GSP1. May be a cytoplasmic GEF for GSP1. Might also act on the Ras-like protein CDC42. Appears to bind to Ras proteins but not to activate them. This Saccharomyces cerevisiae (strain ATCC 204508 / S288c) (Baker's yeast) protein is Bud site selection protein 5 (BUD5).